Reading from the N-terminus, the 295-residue chain is Energy-coupling factor transporter ATP-binding protein EcfA2 (295 aa).

One can recognise an ABC transporter domain in the interval I3–G246. G40–S47 is a binding site for ATP.

This sequence belongs to the ABC transporter superfamily. Energy-coupling factor EcfA family. As to quaternary structure, forms a stable energy-coupling factor (ECF) transporter complex composed of 2 membrane-embedded substrate-binding proteins (S component), 2 ATP-binding proteins (A component) and 2 transmembrane proteins (T component).

The protein resides in the cell membrane. In terms of biological role, ATP-binding (A) component of a common energy-coupling factor (ECF) ABC-transporter complex. Unlike classic ABC transporters this ECF transporter provides the energy necessary to transport a number of different substrates. The polypeptide is Energy-coupling factor transporter ATP-binding protein EcfA2 (Lactiplantibacillus plantarum (strain ATCC BAA-793 / NCIMB 8826 / WCFS1) (Lactobacillus plantarum)).